We begin with the raw amino-acid sequence, 373 residues long: tRNA-specific 2-thiouridylase MnmA (373 aa).

ATP is bound by residues 12 to 19 (GMSGGVDS) and M38. Positions 98-100 (NPD) are interaction with target base in tRNA. C103 (nucleophile) is an active-site residue. Residues C103 and C200 are joined by a disulfide bond. Position 127 (G127) interacts with ATP. The interaction with tRNA stretch occupies residues 150–152 (KDQ). The Cysteine persulfide intermediate role is filled by C200. The interaction with tRNA stretch occupies residues 312–313 (RY).

It belongs to the MnmA/TRMU family.

It localises to the cytoplasm. The catalysed reaction is S-sulfanyl-L-cysteinyl-[protein] + uridine(34) in tRNA + AH2 + ATP = 2-thiouridine(34) in tRNA + L-cysteinyl-[protein] + A + AMP + diphosphate + H(+). Functionally, catalyzes the 2-thiolation of uridine at the wobble position (U34) of tRNA, leading to the formation of s(2)U34. The polypeptide is tRNA-specific 2-thiouridylase MnmA (Streptococcus pneumoniae (strain ATCC 700669 / Spain 23F-1)).